Reading from the N-terminus, the 306-residue chain is sn-1-specific diacylglycerol lipase ABHD11 (306 aa).

Residues 19–40 are disordered; it reads GPSFARVPVAPSSSSGGRGGAE. Positions 23 to 33 are enriched in low complexity; the sequence is ARVPVAPSSSS. The residue at position 78 (lysine 78) is an N6-succinyllysine. Catalysis depends on charge relay system residues serine 132, aspartate 228, and histidine 287.

Belongs to the AB hydrolase superfamily. In terms of assembly, interacts with OGDH and DLST; this interaction maintains the functional lipoylation of the 2-oxoglutarate dehydrogenase complex. In terms of processing, phosphorylated. As to expression, ubiquitously expressed. Highly expressed in small intestine, prostate and thyroid, while aorta and colon tissues exhibit weak expression levels.

The protein localises to the mitochondrion. The protein resides in the mitochondrion matrix. The catalysed reaction is 1-octadecanoyl-2-(5Z,8Z,11Z,14Z-eicosatetraenoyl)-sn-glycerol + H2O = 2-(5Z,8Z,11Z,14Z-eicosatetraenoyl)-glycerol + octadecanoate + H(+). It carries out the reaction a 1,2-diacyl-sn-glycerol + H2O = a 2-acylglycerol + a fatty acid + H(+). It catalyses the reaction a 1,3-diacyl-sn-glycerol + H2O = a 1-acyl-sn-glycerol + a fatty acid + H(+). The enzyme catalyses 1-octadecanoyl-2-(9Z-octadecenoyl)-sn-glycerol + H2O = 2-(9Z-octadecenoyl)-glycerol + octadecanoate + H(+). The catalysed reaction is 1-octadecanoyl-2-(4Z,7Z,10Z,13Z,16Z,19Z-docosahexaenoyl)-sn-glycerol + H2O = 2-(4Z,7Z,10Z,13Z,16Z,19Z-docosahexaenoyl)-glycerol + octadecanoate + H(+). It carries out the reaction 1,2-didecanoylglycerol + H2O = decanoylglycerol + decanoate + H(+). Functionally, catalyzes the hydrolysis of diacylglycerol in vitro and may function as a key regulator in lipid metabolism, namely by regulating the intracellular levels of diacylglycerol. 1,2-diacyl-sn-glycerols are the preferred substrate over 1,3-diacyl-sn-glycerols. The enzyme hydrolyzes stearate in preference to palmitate from the sn-1 position of 1,2-diacyl-sn-glycerols. Maintains the functional lipoylation of the 2-oxoglutarate dehydrogenase complex (OGDHc) through its interaction with the OGDHc by preventing the formation of lipoyl adducts. In addition, is also required for the expansion and differentiation of embryonic stem cells (ESCs). This Homo sapiens (Human) protein is sn-1-specific diacylglycerol lipase ABHD11.